The following is a 240-amino-acid chain: Nicotinamide riboside kinase (240 aa).

An ATP-binding site is contributed by 13 to 21; sequence GCSSSGKTT. The Mg(2+) site is built by Thr-20 and Asp-39. Asp-39 serves as the catalytic Proton acceptor. Substrate contacts are provided by residues 39–42 and 59–60; these read DDFY and WD. Arg-158 is an ATP binding site. Residues Arg-159 and 164-165 each bind substrate; that span reads GY. ATP-binding positions include 162 to 164 and 208 to 210; these read RKG and KSK.

It belongs to the uridine kinase family. NRK subfamily.

It carries out the reaction beta-nicotinamide D-riboside + ATP = beta-nicotinamide D-ribonucleotide + ADP + H(+). The catalysed reaction is beta-D-ribosylnicotinate + ATP = nicotinate beta-D-ribonucleotide + ADP + H(+). Its pathway is cofactor biosynthesis; NAD(+) biosynthesis. Its function is as follows. Catalyzes the phosphorylation of nicotinamide riboside (NR) and nicotinic acid riboside (NaR) to form nicotinamide mononucleotide (NMN) and nicotinic acid mononucleotide (NaMN). This Saccharomyces cerevisiae (strain ATCC 204508 / S288c) (Baker's yeast) protein is Nicotinamide riboside kinase (NRK1).